A 738-amino-acid polypeptide reads, in one-letter code: MLGQCTLLPVLAGLLSLESALSQLCTKDNVSTCQDCIRSGPSCAWCQKLNFTGRGEPDSVRCDTPEQLLLKGCTSEYLVDPKSLAESQEDKERDQRQLSPRNVTVFLRPGQAATFKVDFQRTQDNSVDLYFLMGLSGSAQGHLSNVQTLGSDLLKALNEISRSGRIGFGSIVNMTFQHILKLTADSSQFQRELRKQLVSGKLATPKGQLDAVVQVAICLGEIGWRNGTRFLVLVTDNDFHLAKDKTLGTRQNTSDGRCHLDDGMYRSRGEPDYQSVVQLASKLAENNIQPIFVVPSRMVKTYEKLTTFIPKLTIGELSDDSSNVAQLIRNAYSKLSSIVVLNHSTIPSILKVTYDSYCSNGTSNPGKPSGDCSGVQINDQVTFQVNITASECFREQFFFIQALGFMDSVTVRVLPLCECQCQEQSQHHSLCGGKGAMECGICRCNSGYAGKNCECQTQGPSSQDLEGSCRKDNSSIMCSGLGDCICGQCECHTSDIPNKEIYGQYCECNNVNCERYDGQVCGGPERGHCSCGRCFCRYGFVGSACQCRMSTSGCLNNRMVECSGHGRCYCNRCLCDPGYQPPLCEKRPGYFHRCSEYYSCARCLKDNSAIKCRECWNLLFSNTPFSNKTCMTERDSEGCWTTYTLYQPDQSDINSIYIKESLVCAEISNTTILLGVIVGVLLAVIFLLVYCMVYLKGTQKAAKLPRKGGAQSTLAQQPHFQEPHHVEPVWNQERQGTQ.

The N-terminal stretch at 1–22 is a signal peptide; that stretch reads MLGQCTLLPVLAGLLSLESALS. Over 23 to 671 the chain is Extracellular; that stretch reads QLCTKDNVST…LVCAEISNTT (649 aa). Residues 24–74 form the PSI domain; sequence LCTKDNVSTCQDCIRSGPSCAWCQKLNFTGRGEPDSVRCDTPEQLLLKGCT. 23 cysteine pairs are disulfide-bonded: cysteine 25/cysteine 419, cysteine 33/cysteine 43, cysteine 36/cysteine 73, cysteine 46/cysteine 62, cysteine 218/cysteine 258, cysteine 358/cysteine 372, cysteine 421/cysteine 439, cysteine 431/cysteine 442, cysteine 444/cysteine 453, cysteine 455/cysteine 486, cysteine 469/cysteine 484, cysteine 478/cysteine 489, cysteine 491/cysteine 506, cysteine 508/cysteine 531, cysteine 513/cysteine 529, cysteine 521/cysteine 534, cysteine 536/cysteine 545, cysteine 547/cysteine 570, cysteine 554/cysteine 568, cysteine 562/cysteine 573, cysteine 575/cysteine 584, cysteine 594/cysteine 603, and cysteine 600/cysteine 664. An N-linked (GlcNAc...) asparagine glycan is attached at asparagine 29. N-linked (GlcNAc...) asparagine glycans are attached at residues asparagine 50, asparagine 102, asparagine 173, asparagine 226, asparagine 252, asparagine 342, asparagine 360, and asparagine 386. In terms of domain architecture, VWFA spans 126 to 329; that stretch reads SVDLYFLMGL…DSSNVAQLIR (204 aa). I-EGF domains follow at residues 421–454, 455–507, 508–546, and 547–585; these read CQEQ…KNCE, CQTQ…QYCE, CNNV…SACQ, and CRMS…PLCE. The N-linked (GlcNAc...) asparagine glycan is linked to asparagine 473. Asparagine 627 and asparagine 669 each carry an N-linked (GlcNAc...) asparagine glycan. A helical transmembrane segment spans residues 672–692; the sequence is ILLGVIVGVLLAVIFLLVYCM. Residues 693-738 are Cytoplasmic-facing; it reads VYLKGTQKAAKLPRKGGAQSTLAQQPHFQEPHHVEPVWNQERQGTQ. Positions 709–738 are disordered; sequence GAQSTLAQQPHFQEPHHVEPVWNQERQGTQ. Residues 710-719 are compositionally biased toward polar residues; sequence AQSTLAQQPH.

This sequence belongs to the integrin beta chain family. As to quaternary structure, monomer and homodimer. Unlike integrin beta chains, no alpha chain partner has yet been found. Post-translationally, N-glycosylated. As to expression, expressed predominantly in maturing and mature neutrophils.

It localises to the cell membrane. During inflammatory stimulation, plays a role in retaining Cxcl13-expressing cells at the site of the inflammatory response. This chain is Integrin beta-2-like protein, found in Mus musculus (Mouse).